A 250-amino-acid chain; its full sequence is Replicating protein (250 aa).

2 disordered regions span residues 1–23 (MFQQIGAVQAKSGTDEPAHPCEK) and 168–250 (KAHM…KAFE). 2 stretches are compositionally biased toward basic and acidic residues: residues 13 to 23 (GTDEPAHPCEK) and 178 to 190 (DRLRETVEDRTRA). Residues 218 to 237 (SRCSFTTPNRPRRTLPSSHP) are compositionally biased toward polar residues.

Functionally, required for replication. It likely regulates pTAR copy number. The polypeptide is Replicating protein (repA) (Rhizobium radiobacter (Agrobacterium tumefaciens)).